The following is a 492-amino-acid chain: Serine/threonine protein phosphatase 2A 57 kDa regulatory subunit B' theta isoform (492 aa).

The disordered stretch occupies residues 1–63 (MWKQILSKLP…GFKEGNLKGN (63 aa)). A compositionally biased stretch (low complexity) spans 16 to 39 (KNHSSSSSSTSKSSDNGASKSGNS). A Microbody targeting signal motif is present at residues 490–492 (SSL).

The protein belongs to the phosphatase 2A regulatory subunit B56 family. As to quaternary structure, PP2A consists of a common heteromeric enzyme, composed of a catalytic subunit (subunits C), a constant regulatory subunit (subunit A), and a variety of regulatory subunits such as subunits B (the R2/B/PR55/B55, R3/B''/PR72/PR130/PR59 and R5/B'/B56 families). Interacts with BZR1. Interacts with PP2A2, PP2A5 and PP2AA2. In terms of tissue distribution, highly expressed in dry seeds. Expressed in roots, cotyledons, rosette leaves and flowers.

It is found in the cytoplasm. The protein resides in the cytosol. The protein localises to the peroxisome. In terms of biological role, the B regulatory subunit may modulate substrate selectivity and catalytic activity, and may also direct the localization of the catalytic enzyme to a particular subcellular compartment. Associates with the serine/threonine-protein phosphatase PP2A catalytic subunit C and regulatory subunit A to positively regulates beta-oxidation of fatty acids and protoauxins in peroxisomes by dephosphorylating peroxisomal beta-oxidation-related proteins. Required for the formation of the PP2A holoenzyme that negatively regulates brassinosteroid signaling by dephosphorylating and inactivating BRI1 in the cytoplasm. The sequence is that of Serine/threonine protein phosphatase 2A 57 kDa regulatory subunit B' theta isoform (B'THETA) from Arabidopsis thaliana (Mouse-ear cress).